An 88-amino-acid chain; its full sequence is MKFFIATIFATGALAISVCPTGLYSNPQCCGANILGVAALDCHTPRAPILPGALFEAVCSDEGGKEPLCCTIPVAGQDLLCVAPVGTA.

An N-terminal signal peptide occupies residues 1–15 (MKFFIATIFATGALA). Cystine bridges form between Cys19-Cys69, Cys29-Cys59, Cys30-Cys42, and Cys70-Cys81.

The protein belongs to the cerato-ulmin hydrophobin family. In terms of assembly, homodimer. Homodimers further self-assemble to form highly ordered films at water-air interfaces through intermolecular interactions.

It is found in the secreted. The protein localises to the cell wall. Functionally, aerial growth, conidiation, and dispersal of filamentous fungi in the environment rely upon a capability of their secreting small amphipathic proteins called hydrophobins (HPBs) with low sequence identity. Class I can self-assemble into an outermost layer of rodlet bundles on aerial cell surfaces, conferring cellular hydrophobicity that supports fungal growth, development and dispersal; whereas Class II form highly ordered films at water-air interfaces through intermolecular interactions but contribute nothing to the rodlet structure. This is Class II hydrophobin 1 from Trichoderma asperellum (strain ATCC 204424 / CBS 433.97 / NBRC 101777).